The primary structure comprises 263 residues: 3-methyl-2-oxobutanoate hydroxymethyltransferase (263 aa).

2 residues coordinate Mg(2+): Asp43 and Asp82. 3-methyl-2-oxobutanoate contacts are provided by residues 43-44 (DS), Asp82, and Lys111. Glu113 provides a ligand contact to Mg(2+). Glu179 acts as the Proton acceptor in catalysis.

Belongs to the PanB family. Homodecamer; pentamer of dimers. Requires Mg(2+) as cofactor.

It is found in the cytoplasm. It catalyses the reaction 3-methyl-2-oxobutanoate + (6R)-5,10-methylene-5,6,7,8-tetrahydrofolate + H2O = 2-dehydropantoate + (6S)-5,6,7,8-tetrahydrofolate. It participates in cofactor biosynthesis; (R)-pantothenate biosynthesis; (R)-pantoate from 3-methyl-2-oxobutanoate: step 1/2. Functionally, catalyzes the reversible reaction in which hydroxymethyl group from 5,10-methylenetetrahydrofolate is transferred onto alpha-ketoisovalerate to form ketopantoate. The protein is 3-methyl-2-oxobutanoate hydroxymethyltransferase of Neisseria meningitidis serogroup B (strain ATCC BAA-335 / MC58).